A 373-amino-acid chain; its full sequence is Transaldolase (373 aa).

K143 acts as the Schiff-base intermediate with substrate in catalysis.

The protein belongs to the transaldolase family. Type 2 subfamily.

It is found in the cytoplasm. The catalysed reaction is D-sedoheptulose 7-phosphate + D-glyceraldehyde 3-phosphate = D-erythrose 4-phosphate + beta-D-fructose 6-phosphate. It participates in carbohydrate degradation; pentose phosphate pathway; D-glyceraldehyde 3-phosphate and beta-D-fructose 6-phosphate from D-ribose 5-phosphate and D-xylulose 5-phosphate (non-oxidative stage): step 2/3. Transaldolase is important for the balance of metabolites in the pentose-phosphate pathway. The polypeptide is Transaldolase (Mycobacterium ulcerans (strain Agy99)).